The sequence spans 284 residues: Diaminopimelate epimerase (284 aa).

Positions 14 and 67 each coordinate substrate. Catalysis depends on Cys76, which acts as the Proton donor. Substrate is bound by residues 77-78 (GN), Asn166, Asn199, and 217-218 (ER). The Proton acceptor role is filled by Cys226. 227 to 228 (GT) is a substrate binding site.

Belongs to the diaminopimelate epimerase family. As to quaternary structure, homodimer.

The protein resides in the cytoplasm. The catalysed reaction is (2S,6S)-2,6-diaminopimelate = meso-2,6-diaminopimelate. It functions in the pathway amino-acid biosynthesis; L-lysine biosynthesis via DAP pathway; DL-2,6-diaminopimelate from LL-2,6-diaminopimelate: step 1/1. Catalyzes the stereoinversion of LL-2,6-diaminopimelate (L,L-DAP) to meso-diaminopimelate (meso-DAP), a precursor of L-lysine and an essential component of the bacterial peptidoglycan. The chain is Diaminopimelate epimerase from Bacillus subtilis (strain 168).